A 488-amino-acid polypeptide reads, in one-letter code: Probable glycine dehydrogenase (decarboxylating) subunit 2 (488 aa).

The residue at position 274 (Lys274) is an N6-(pyridoxal phosphate)lysine.

It belongs to the GcvP family. C-terminal subunit subfamily. The glycine cleavage system is composed of four proteins: P, T, L and H. In this organism, the P 'protein' is a heterodimer of two subunits. It depends on pyridoxal 5'-phosphate as a cofactor.

The enzyme catalyses N(6)-[(R)-lipoyl]-L-lysyl-[glycine-cleavage complex H protein] + glycine + H(+) = N(6)-[(R)-S(8)-aminomethyldihydrolipoyl]-L-lysyl-[glycine-cleavage complex H protein] + CO2. The glycine cleavage system catalyzes the degradation of glycine. The P protein binds the alpha-amino group of glycine through its pyridoxal phosphate cofactor; CO(2) is released and the remaining methylamine moiety is then transferred to the lipoamide cofactor of the H protein. This is Probable glycine dehydrogenase (decarboxylating) subunit 2 from Listeria monocytogenes serotype 4b (strain F2365).